The primary structure comprises 289 residues: Oxaloacetate decarboxylase 1 (289 aa).

Serine 50 contacts substrate. Aspartate 88 is a Mg(2+) binding site. Substrate is bound by residues arginine 159 and histidine 235.

This sequence belongs to the isocitrate lyase/PEP mutase superfamily. Oxaloacetate decarboxylase family. As to quaternary structure, homotetramer; dimer of dimers. It depends on Mg(2+) as a cofactor.

It carries out the reaction oxaloacetate + H(+) = pyruvate + CO2. In terms of biological role, catalyzes the decarboxylation of oxaloacetate into pyruvate. Seems to play a role in maintaining cellular concentrations of bicarbonate and pyruvate. In Pseudomonas putida (strain W619), this protein is Oxaloacetate decarboxylase 1.